The sequence spans 685 residues: Stromal interaction molecule 1 (685 aa).

The signal sequence occupies residues 1–22 (MDVCARLALWLLWGLLLHQGQS). At 23–213 (LSHSHSEKNT…LLTRHNHLKD (191 aa)) the chain is on the extracellular side. A disordered region spans residues 24 to 43 (SHSHSEKNTGASSGATSEES). Residues 32–41 (TGASSGATSE) are compositionally biased toward low complexity. EF-hand domains follow at residues 64–97 (SFEA…EDLN) and 102–126 (TVKH…AWKS). Residues Asp76, Asp78, Asn80, Asp82, and Glu87 each coordinate Ca(2+). Asn131 and Asn171 each carry an N-linked (GlcNAc...) asparagine glycan. Residues 132–200 (WTVDEVIQWL…QLKALDTVLF (69 aa)) enclose the SAM domain. Residues 214-234 (FMLVVSIVIGVGGCWFAYIQN) traverse the membrane as a helical segment. Over 235–685 (RYSKEHMKKM…LKIFKKPLKK (451 aa)) the chain is Cytoplasmic. The stretch at 248 to 442 (LEGLHRAEQS…IEILCGFQIV (195 aa)) forms a coiled coil. The residue at position 257 (Ser257) is a Phosphoserine. The segment at 344 to 442 (PEALQKWLQL…IEILCGFQIV (99 aa)) is SOAR/CAD. The tract at residues 475–483 (DDVDDMDEE) is contributes to fast Ca(2+)-dependent inactivation of CRAC channels. The span at 490–499 (MQSPSLQSSV) shows a compositional bias: low complexity. Residues 490 to 541 (MQSPSLQSSVRQRLTEPQLGLGSQRDLTHSDSESSLHMSDRQRVAPKPPQMG) are disordered. Thr504 is modified (phosphothreonine). At Ser512 the chain carries Phosphoserine. Positions 515–532 (DLTHSDSESSLHMSDRQR) are enriched in basic and acidic residues. At Thr517 the chain carries Phosphothreonine. A phosphoserine mark is found at Ser519, Ser521, Ser523, Ser524, Ser567, Ser575, Ser602, Ser608, Ser618, Ser621, and Ser628. Residues 596–685 (LMELNPSVPP…LKIFKKPLKK (90 aa)) are disordered. The segment covering 608–620 (SPLLDSSHSLSPS) has biased composition (low complexity). A Microtubule tip localization signal motif is present at residues 642 to 645 (TRIP). Residues 655-666 (EEDNGSIGEETD) show a composition bias toward acidic residues. Ser660 carries the post-translational modification Phosphoserine. Thr665 carries the phosphothreonine modification. Ser668 is subject to Phosphoserine. Residues 670 to 685 (GRKKFPLKIFKKPLKK) are compositionally biased toward basic residues. A required for generation of inwardly rectifying CRAC currents region spans residues 672–685 (KKFPLKIFKKPLKK).

As to quaternary structure, monomer in the presence of Ca(2+). It oligomerizes in absence of Ca(2+). Forms homooligomers and heterooligomers with STIM2. Interacts with pore-forming subunits of CRAC channels, ORAI1, ORAI2 and ORAI3; this interaction is potentiated upon Ca(2+) store depletion. Interacts (via the transmembrane region and the SOAR/CAD domain) with SPPL3; the interaction promotes the binding of STIM1 to ORAI1. Interacts with ORAI1. Interacts with MAPRE1; probably required for targeting to the growing microtubule plus ends. Interacts with CRACR2A/EFCAB4B; the interaction is direct and takes place in absence of Ca(2+). Forms a complex with CRACR2A/EFCAB4B and ORAI1 at low concentration of Ca(2+), the complex dissociates at elevated Ca(2+) concentrations. Interacts with SARAF, promoting a slow inactivation of STIM1-dependent SOCE activity, possibly by facilitating the deoligomerization of STIM1. Interacts with EFHB; the interaction takes place upon Ca(2+)-store depletion and inhibits the association with SARAF. Interacts with ASPH. Interacts with SLC35G1; intracellular Ca(2+)-dependent. May interact with ATP1A1, ATP2A2, ATP2B1, ATP2B4, KPNB1 and XPO1; through SLC35G1. Interacts with STIMATE, promoting STIM1 conformational switch. Interacts with TMEM178A. Interacts with CASQ1 (via C-terminal end and preferentially with the monomeric form); this interaction increases in response to a depletion of intracellular Ca(2+), decreases both STIM1 aggregation and clustering, interaction of STIM1 with ORAI1 and store-operated Ca(2+) entry (SOCE) activity. Interacts with ADCY8. Interacts with TMEM203. Glycosylation is required for cell surface expression. Post-translationally, phosphorylated predominantly on Ser residues. In terms of tissue distribution, expressed in maturation-stage ameloblasts (at protein level). Expressed in all tissues examined and in many cell types, including bone marrow stroma, fibroblast, B-cell precursors, lymphoma and erythroleukemia.

It is found in the cell membrane. Its subcellular location is the endoplasmic reticulum membrane. The protein resides in the sarcoplasmic reticulum. It localises to the cytoplasm. The protein localises to the cytoskeleton. Its function is as follows. Acts as a Ca(2+) sensor that gates two major inward rectifying Ca(2+) channels at the plasma membrane: Ca(2+) release-activated Ca(2+) (CRAC) channels and arachidonate-regulated Ca(2+)-selective (ARC) channels. Plays a role in mediating store-operated Ca(2+) entry (SOCE), a Ca(2+) influx following depletion of intracellular Ca(2+) stores. Upon Ca(2+) depletion, translocates from the endoplasmic reticulum to the plasma membrane where it activates CRAC channel pore-forming subunits ORA1, ORA2 and ORAI3 to generate sustained and oscillatory Ca(2+) entry. Involved in enamel formation. The sequence is that of Stromal interaction molecule 1 (Stim1) from Mus musculus (Mouse).